Reading from the N-terminus, the 337-residue chain is F420-dependent glucose-6-phosphate dehydrogenase (337 aa).

D40 lines the coenzyme F420-(gamma-Glu)n pocket. H41 functions as the Proton donor in the catalytic mechanism. Residues T77 and 108–109 contribute to the coenzyme F420-(gamma-Glu)n site; that span reads SG. Catalysis depends on E110, which acts as the Proton acceptor. Residues N113, 178–179, and 181–182 each bind coenzyme F420-(gamma-Glu)n; these read GG and VV. Residues T196, K199, K260, and R284 each contribute to the substrate site.

This sequence belongs to the F420-dependent glucose-6-phosphate dehydrogenase family. In terms of assembly, homodimer.

The enzyme catalyses oxidized coenzyme F420-(gamma-L-Glu)(n) + D-glucose 6-phosphate + H(+) = 6-phospho-D-glucono-1,5-lactone + reduced coenzyme F420-(gamma-L-Glu)(n). Functionally, catalyzes the coenzyme F420-dependent oxidation of glucose 6-phosphate (G6P) to 6-phosphogluconolactone. This chain is F420-dependent glucose-6-phosphate dehydrogenase, found in Rhodococcus erythropolis (strain PR4 / NBRC 100887).